An 860-amino-acid polypeptide reads, in one-letter code: Glucans biosynthesis glucosyltransferase H (860 aa).

Transmembrane regions (helical) follow at residues 146–166, 200–220, 519–539, 576–596, 610–630, and 686–706; these read ILLI…KGIL, ILLL…TALM, VFLT…FLVL, LFST…ILIW, TVSM…RMLF, and FLWW…VSVI.

The protein belongs to the glycosyltransferase 2 family. OpgH subfamily.

The protein resides in the cell inner membrane. The protein operates within glycan metabolism; osmoregulated periplasmic glucan (OPG) biosynthesis. Functionally, involved in the biosynthesis of osmoregulated periplasmic glucans (OPGs). In Pseudomonas syringae pv. syringae (strain B728a), this protein is Glucans biosynthesis glucosyltransferase H.